The following is a 61-amino-acid chain: Large ribosomal subunit protein uL30 (61 aa).

It belongs to the universal ribosomal protein uL30 family. Part of the 50S ribosomal subunit.

In Exiguobacterium sp. (strain ATCC BAA-1283 / AT1b), this protein is Large ribosomal subunit protein uL30.